A 2555-amino-acid chain; its full sequence is MPQQPEIQDIYPLSFMQEGMLFHSLYDEQSRAYFEQASFTIHGQLDLERFQKSMDAVFDRYDIFRTAFIYKNVAKPRQVVLKQRHCPIHIEDISHLNERDKEHCTEAFKEQDKSKGFDLQTDVLMRISILKWAPDHYVCIWSHHHILMDGWCLGIVIKDFLHIYQALGKGQLPDLPPVQPYGTYIKWLMQQDREEAAEYWKKRLQHFEKSTPLPKRTDQIPNGTLQQITFAIPEKETAELQKIAAASGATLNTVFQALWGIMLQKVNRSSDAVFGSVISGRPSELKDVENMVGLFINTIPIRAQSDSLSFSDLVRRMQKDMNEAEAYSYFPLYDIQAQSALKQELIDHIIVFENTPTQQEIEELNQAGSFDFSVKDFEMEEVTNYSCSVKVIPGRTLYVRIHFQTSAYQPSMMSEIKDYLLHMVSDVISDPSLPVSKMTLLDEDKTRKIVSQNNRTVSVSPEAPTLHGLFERQAAVTPERLAIRFSGGSLTYAELDMYASRLAAHLAARGVTNESIVGVLSERSPDMLIAVLAVLKAGGAYLPLDPAYPKERLSYMLKDSGASLLLTQPGCSAPNFSGETLEVDMTSLECEEVKRHVSASVSDGSLAYVIYTSGSTGQPKGVAVEHRQAVSFLTGMQHQFRLSEDDIVMVKTSFSFDASVWQLFWWALSGASAYLLPPGWEKDSALIVQAIHQENVTTAHFIPAMLNSFLDQAEIERLSDRTSLKRVFAGGEPLAPRTAARFASVLPQVSLIHGYGPTEATVDAAFYVLDPERDRDRLRIPIGKPVPGARLYVLDPHLAVQPSGVAGELYIAGAGVARGYLNRPALTEERFLEDPFYLGERMYKTGDVARWLPDGNVEFLGRTDDQVKIRGYRIEPGEIEAALRSIEGVREAAVTVRTDSGEPELCAYVEGLQRNEVRAQLQRLLPGYMVPAYMIEMEQWPVTPSGKLDRNALPAPGGAADAETYTAPRNVTEMKLSQLWEDVLKNGPVGIHDNFFDRGGHSLKATALVSRIAKEFDVQVPLKDVFAHPTVEGLATVIREGTDSPYEAIKPAEKQETYPVSSAQKRIYVLQQLEDGGTGYNMPAVLELEGKLNLERMDRAFKELIKRHESLRTAFEQDAGGDPVQRIHDEVPFTLQTTVLGARTEEEAAAAFIKPFDLSQAPLFRAQIVKVSDERHLLLVDMHHIISDGVSVNILIREFGELYNNRKLPALRIQYKDYAVWQEGFKTGDAYKTQGAYWLKQLEGELPVLDLPADHARPPMRSFAGDKVSFTLDQEVTSGLYKLARENGSTLYMVLLAAYTAFLSRLSGQEDIIVGSPIAGRPHKDLEPILGMFVNTLALRTRPEGGKPFVQYLQEVRETAMEAFEHQDYPFEELVDKLELTRDMSRNPLFDVMFVLQNMDQESLELDELCLKPAANNGHQTSKFDLTLYAQEQPRGLLTFQMEFSTDLYKKKTIEKWLQYFNNMLLSIIKDNKAALGTINILNEDEAHYLIHELNRTKIDYPRNETISRLFEMQAEQTPNAVAIVSDTQVFTYEDLNSWANQIASVLQIKGVGPDSVVALLTGRTPELIAGMLGILKAGGAYLPIDSNLPVERIAYMLSDSRAALLLQSEKTEKRLLGIECEQIIIEDIQKQGEAKNVESSAGPHSLAYIIYTSGSTGKPKGVMIEQRSVIRLVKNSNYITFTPEDRLLMTSSIGFDVGSFEIFGPLLNGAALHLSDQQTFLDSHQLKRYIEHQGITTIWLTSSLFNHLTEQNEQTFSQLKHLIIGGEALSPSHVNRIRNVCPEVSIWNGYGPTENTTFSTCLHIQKTYELSIPIGRPVGNSTAFILNQWGVLQPVGAVGELCVGGDGVARGYLGRPDLTKEKFVPHPFAPGDRLYRTGDLARWLSDGTIEYVGRIDDQVKVRGYRVELGEIETALRQIDGVKEAAVLARTAQTGSKELFGYISVKAGTNAEQVRSLLARSLPNYMIPAYIIEMETLPLTSNGKLNRKALPEPDVASKQTYIPPRNELEEQLALIWQEVLGIQRIGIEDSFFELGGDSIKALQVSARLGRYGLSLQVSDLFRHPKIKDLSPFIRKSERIIEQGPIQGDVPWTPVQQWFFSQDIEERHHFNQSVMLFHSGRLSENALRPALKKLAEHHDALRMVYRNDDRRWIQINQGIHESQLYSLRISDLSQSESGWETKIKQEVADLQQSINLQEGPLLHAALFKTLTGDYLFLAIHHLVVDGVSWRILLEDLSAGYQQAAAGQTIQLPPKTDSYQEYARRIQEYAQSSKLIREEAYWRSVEEQQAAELPYEIPHHVNIDFSKRDSLSFSLTEADTAVLLQNVNHAYGTDTQDILLTAASLAICEWTGGSKLRIAMEGHGREHILPELDISRTVGWFTSMYPALISFENHRDELGTSVKTVKDTLGRIPNKGVGYGMLKYLTHPENKSITFSKTPEISFNYLGQFNDIERQDTFRPSSLGSGKDITHTWKREQIIEMSAMAADKKLHFNLSYPPARFHRNTMEQLINRIEHFLLDIMKHCAGQQKAEKTLSDFSSQSLTAEDLDSISSLVEEL.

Residues 7–306 (IQDIYPLSFM…NTIPIRAQSD (300 aa)) form a condensation 1 region. The tract at residues 491–894 (TYAELDMYAS…SIEGVREAAV (404 aa)) is adenylation 1. Residues 967-1042 (APRNVTEMKL…GLATVIREGT (76 aa)) form the Carrier 1 domain. At Ser1002 the chain carries O-(pantetheine 4'-phosphoryl)serine. The condensation 2 stretch occupies residues 1054–1344 (KQETYPVSSA…NTLALRTRPE (291 aa)). The segment at 1532-1927 (TYEDLNSWAN…QIDGVKEAAV (396 aa)) is adenylation 2. A Carrier 2 domain is found at 2003–2077 (PPRNELEEQL…DLSPFIRKSE (75 aa)). Residue Ser2038 is modified to O-(pantetheine 4'-phosphoryl)serine. Positions 2085-2548 (IQGDVPWTPV…SLTAEDLDSI (464 aa)) are epimerization 3.

The protein belongs to the ATP-dependent AMP-binding enzyme family. It depends on pantetheine 4'-phosphate as a cofactor.

Functionally, this protein is a multifunctional enzyme, able to activate and polymerize the amino acids Glu and Ala/Val as part of the biosynthesis of the lipopeptide antibiotic plipastatin. The Ala/Val residue is further epimerized to the D-isomer form. The activation sites for these amino acids consist of individual domains. This chain is Plipastatin synthase subunit C (ppsC), found in Bacillus subtilis (strain 168).